A 216-amino-acid chain; its full sequence is Ribosomal RNA small subunit methyltransferase G (216 aa).

S-adenosyl-L-methionine is bound by residues glycine 83, methionine 88, 134–135 (VE), and arginine 149.

The protein belongs to the methyltransferase superfamily. RNA methyltransferase RsmG family.

Its subcellular location is the cytoplasm. The enzyme catalyses guanosine(527) in 16S rRNA + S-adenosyl-L-methionine = N(7)-methylguanosine(527) in 16S rRNA + S-adenosyl-L-homocysteine. Functionally, specifically methylates the N7 position of guanine in position 527 of 16S rRNA. The protein is Ribosomal RNA small subunit methyltransferase G of Pseudomonas putida (strain ATCC 700007 / DSM 6899 / JCM 31910 / BCRC 17059 / LMG 24140 / F1).